The primary structure comprises 131 residues: D-ribose pyranase (131 aa).

His20 serves as the catalytic Proton donor. Residues Asp28, His98, and 120 to 122 contribute to the substrate site; that span reads YAN.

The protein belongs to the RbsD / FucU family. RbsD subfamily. In terms of assembly, homodecamer.

The protein localises to the cytoplasm. The catalysed reaction is beta-D-ribopyranose = beta-D-ribofuranose. It functions in the pathway carbohydrate metabolism; D-ribose degradation; D-ribose 5-phosphate from beta-D-ribopyranose: step 1/2. Its function is as follows. Catalyzes the interconversion of beta-pyran and beta-furan forms of D-ribose. The protein is D-ribose pyranase of Symbiobacterium thermophilum (strain DSM 24528 / JCM 14929 / IAM 14863 / T).